We begin with the raw amino-acid sequence, 487 residues long: Glutamate--tRNA ligase (487 aa).

The 'HIGH' region motif lies at 11–21 (PSPTGYPHLGN). Zn(2+) is bound by residues cysteine 108, cysteine 110, cysteine 135, and aspartate 137. The 'KMSKS' region motif lies at 245–249 (KLSKR). Lysine 248 contributes to the ATP binding site.

This sequence belongs to the class-I aminoacyl-tRNA synthetase family. Glutamate--tRNA ligase type 1 subfamily. In terms of assembly, monomer. The cofactor is Zn(2+).

It localises to the cytoplasm. The catalysed reaction is tRNA(Glu) + L-glutamate + ATP = L-glutamyl-tRNA(Glu) + AMP + diphosphate. Its function is as follows. Catalyzes the attachment of glutamate to tRNA(Glu) in a two-step reaction: glutamate is first activated by ATP to form Glu-AMP and then transferred to the acceptor end of tRNA(Glu). The protein is Glutamate--tRNA ligase of Dehalococcoides mccartyi (strain CBDB1).